Reading from the N-terminus, the 376-residue chain is Glucose-1-phosphate adenylyltransferase (376 aa).

Residues tyrosine 101, glycine 166, 181–182 (EK), and serine 192 contribute to the alpha-D-glucose 1-phosphate site.

Belongs to the bacterial/plant glucose-1-phosphate adenylyltransferase family. Homotetramer.

The catalysed reaction is alpha-D-glucose 1-phosphate + ATP + H(+) = ADP-alpha-D-glucose + diphosphate. It functions in the pathway glycan biosynthesis; glycogen biosynthesis. Involved in the biosynthesis of ADP-glucose, a building block required for the elongation reactions to produce glycogen. Catalyzes the reaction between ATP and alpha-D-glucose 1-phosphate (G1P) to produce pyrophosphate and ADP-Glc. This chain is Glucose-1-phosphate adenylyltransferase, found in Bacillus cytotoxicus (strain DSM 22905 / CIP 110041 / 391-98 / NVH 391-98).